A 370-amino-acid polypeptide reads, in one-letter code: 3-isopropylmalate dehydrogenase (370 aa).

Residue 76–89 coordinates NAD(+); that stretch reads GPKWDQNPSELRPE. Positions 96, 106, 134, and 224 each coordinate substrate. Mg(2+) contacts are provided by Asp224, Asp248, and Asp252. 282–294 is a binding site for NAD(+); that stretch reads GSAPDIAGQNIAN.

The protein belongs to the isocitrate and isopropylmalate dehydrogenases family. LeuB type 1 subfamily. As to quaternary structure, homodimer. Mg(2+) is required as a cofactor. The cofactor is Mn(2+).

It is found in the cytoplasm. It carries out the reaction (2R,3S)-3-isopropylmalate + NAD(+) = 4-methyl-2-oxopentanoate + CO2 + NADH. It functions in the pathway amino-acid biosynthesis; L-leucine biosynthesis; L-leucine from 3-methyl-2-oxobutanoate: step 3/4. In terms of biological role, catalyzes the oxidation of 3-carboxy-2-hydroxy-4-methylpentanoate (3-isopropylmalate) to 3-carboxy-4-methyl-2-oxopentanoate. The product decarboxylates to 4-methyl-2 oxopentanoate. The polypeptide is 3-isopropylmalate dehydrogenase (Bacillus licheniformis (strain ATCC 14580 / DSM 13 / JCM 2505 / CCUG 7422 / NBRC 12200 / NCIMB 9375 / NCTC 10341 / NRRL NRS-1264 / Gibson 46)).